We begin with the raw amino-acid sequence, 1030 residues long: Calcium-transporting ATPase 4, plasma membrane-type (1030 aa).

Residues 1–157 (MSNLLRDFEV…NRYTEKPARS (157 aa)) are Cytoplasmic-facing. An interaction with calmodulin region spans residues 19–30 (ARQRWRSSVSIV). Ser-28 carries the phosphoserine modification. Residues 158 to 178 (FLMFVWEALHDITLIILMVCA) traverse the membrane as a helical segment. Topologically, residues 179 to 196 (VVSIGVGVATEGFPRGMY) are lumenal. The chain crosses the membrane as a helical span at residues 197 to 217 (DGTGILLSILLVVMVTAISDY). At 218 to 345 (KQSLQFRDLD…EDETPLQVKL (128 aa)) the chain is on the cytoplasmic side. The chain crosses the membrane as a helical span at residues 346 to 365 (NGVATIIGKIGLSFAVLTFV). At 366–395 (VLCIRFVLDKATSGSFTNWSSEDALTLLDY) the chain is on the lumenal side. Residues 396–413 (FAISVTIIVVAVPEGLPL) traverse the membrane as a helical segment. The Cytoplasmic portion of the chain corresponds to 414–804 (AVTLSLAFAM…RWGRAVYINI (391 aa)). Catalysis depends on Asp-451, which acts as the 4-aspartylphosphate intermediate. Residues Asp-749 and Asp-753 each coordinate Mg(2+). The helical transmembrane segment at 805-823 (QKFVQFQLTVNVVALIINF) threads the bilayer. Over 824–834 (VSACITGSAPL) the chain is Lumenal. A helical membrane pass occupies residues 835-855 (TAVQLLWVNMIMDTLGALALA). Over 856-875 (TEPPNEGLMKRAPIARTASF) the chain is Cytoplasmic. The helical transmembrane segment at 876–898 (ITKTMWRNIAGQSVYQLIVLGIL) threads the bilayer. Residues 899–910 (NFAGKSLLKLDG) lie on the Lumenal side of the membrane. A helical membrane pass occupies residues 911-932 (PDSTAVLNTVIFNSFVFCQVFN). The Cytoplasmic portion of the chain corresponds to 933 to 950 (EINSREIEKINVFKGMFN). The helical transmembrane segment at 951-972 (SWVFTWVMTVTVVFQVIIVEFL) threads the bilayer. Residues 973-982 (GAFASTVPLS) are Lumenal-facing. Residues 983 to 1004 (WQHWLLSILIGSLNMIVAVILK) traverse the membrane as a helical segment. Residues 1005-1030 (CVPVESRHHHDGYDLLPSGPSSSNSA) lie on the Cytoplasmic side of the membrane.

It belongs to the cation transport ATPase (P-type) (TC 3.A.3) family. Type IIB subfamily.

It is found in the vacuole membrane. The catalysed reaction is Ca(2+)(in) + ATP + H2O = Ca(2+)(out) + ADP + phosphate + H(+). Activated by calmodulin. This magnesium-dependent enzyme catalyzes the hydrolysis of ATP coupled with the translocation of calcium from the cytosol into small vacuoles. This Arabidopsis thaliana (Mouse-ear cress) protein is Calcium-transporting ATPase 4, plasma membrane-type (ACA4).